Reading from the N-terminus, the 375-residue chain is MFCVQNLPRSSALPLQSFKSHQRRPPCSVNTLGVMSNVNLHRSMAVKAISGPTSSAETSDANVEEEKSETYSTNMTEAMGAVLTYRHELGINYNFIRPDLIVGSCLQTPEDVDKLRSIGVKTIFCLQQNSDLEYFGVDINGIREYAKTYDDIQHLRAEIRDFDAFDLRVRLPAVVSKLYKAINRNGGVTYVHCTAGLGRAPAVTLAYMFWVQGYKLIEAHNLLQSKRSCFPKLDAIKSAAADILTGLRKKVVTLTWKNPDCTTLEISGLDIGWGQRIPLQFDEEQGLWILRRELAEGCYEYKYIVDGEWTINENELVTSANKDGHVNNFVQVFDDNPDSFNANLRKRLTGDDPDLSMDERLKIRQFLESIPDEEQ.

An amyloplast-targeting transit peptide spans 1-42 (MFCVQNLPRSSALPLQSFKSHQRRPPCSVNTLGVMSNVNLHR). A disordered region spans residues 49-71 (ISGPTSSAETSDANVEEEKSETY). Residues 51–61 (GPTSSAETSDA) are compositionally biased toward polar residues. Residues 92 to 249 (NYNFIRPDLI…AADILTGLRK (158 aa)) enclose the Tyrosine-protein phosphatase domain. The active-site Phosphocysteine intermediate is Cys193. Residue 194 to 199 (TAGLGR) participates in substrate binding. Positions 254–330 (LTWKNPDCTT…NKDGHVNNFV (77 aa)) are polysaccharide binding.

Expressed in phloem parenchyma of 16-24 week old seedlings and 2 year old trees (at protein level). Expressed in leaves of 16-24 week old seedlings and 2 year old trees.

Its subcellular location is the plastid. It is found in the amyloplast. It localises to the nucleus. Starch granule-associated phosphoglucan phosphatase involved in the control of starch accumulation. Acts as a major regulator of the initial steps of starch degradation at the granule surface. Functions during the day by dephosphorylating the night-accumulated phospho-oligosaccharides. Can release phosphate from both the C6 and the C3 positions. In Castanea sativa (Sweet chestnut), this protein is Phosphoglucan phosphatase DSP4, amyloplastic.